Reading from the N-terminus, the 339-residue chain is Cathepsin B (339 aa).

The first 17 residues, 1 to 17 (MWQLWASLCCLLVLANA), serve as a signal peptide directing secretion. Residues 18 to 79 (RSRPSFHPLS…QRVMFTEDLK (62 aa)) constitute a propeptide, activation peptide. Intrachain disulfides connect cysteine 93–cysteine 122, cysteine 105–cysteine 150, cysteine 141–cysteine 207, cysteine 142–cysteine 146, cysteine 179–cysteine 211, and cysteine 187–cysteine 198. Cysteine 108 is an active-site residue. An N-linked (GlcNAc...) asparagine glycan is attached at asparagine 192. Lysine 220 is subject to N6-acetyllysine. Catalysis depends on residues histidine 278 and asparagine 298. Positions 334 to 339 (QYWEKI) are excised as a propeptide.

Belongs to the peptidase C1 family. Dimer of a heavy chain and a light chain cross-linked by a disulfide bond. Interacts with SRPX2. Directly interacts with SHKBP1. As to expression, expressed in the stratum spinosum of the epidermis. Weak expression is detected in the stratum granulosum.

It is found in the lysosome. The protein resides in the melanosome. Its subcellular location is the secreted. The protein localises to the extracellular space. It localises to the apical cell membrane. It carries out the reaction Hydrolysis of proteins with broad specificity for peptide bonds. Preferentially cleaves -Arg-Arg-|-Xaa bonds in small molecule substrates (thus differing from cathepsin L). In addition to being an endopeptidase, shows peptidyl-dipeptidase activity, liberating C-terminal dipeptides.. With respect to regulation, inhibited by leupeptin. Functionally, thiol protease which is believed to participate in intracellular degradation and turnover of proteins. Cleaves matrix extracellular phosphoglycoprotein MEPE. Involved in the solubilization of cross-linked TG/thyroglobulin in the thyroid follicle lumen. Has also been implicated in tumor invasion and metastasis. The chain is Cathepsin B (CTSB) from Homo sapiens (Human).